The sequence spans 281 residues: MSIKQEVFLSSGEGGIIQNNYNHSNNYNIYEHNIINEPNISVVVGRTGGGMTTVVQNIVDKIVTINNGDIEVIILTSNPKIYPNVDQCYSLSDIDLAHNYIISNPQNKKILVIDDFFKGVLRDKHTELIINHACLNLHIVLFVQCFVNFTPLIKNNLTYLFINNSVASSDIKSMYDRYLAPKINYRTFEKIMTRLETNRELSLVIVNNGLSDKLRIFESNFTLNPIYKYRCPNLQKQNKEPIDKQSRKKNIIREINDIKSKINDLSNYMDNLISELDDLFD.

Positions 242–281 form a coiled coil; the sequence is IDKQSRKKNIIREINDIKSKINDLSNYMDNLISELDDLFD.

This is an uncharacterized protein from Acanthamoeba polyphaga (Amoeba).